The following is a 223-amino-acid chain: Ribose-5-phosphate isomerase A (223 aa).

Substrate contacts are provided by residues 32-35, 85-88, and 98-101; these read TGST, DGAD, and KGGG. Residue E107 is the Proton acceptor of the active site. K125 contacts substrate.

The protein belongs to the ribose 5-phosphate isomerase family. Homodimer.

The enzyme catalyses aldehydo-D-ribose 5-phosphate = D-ribulose 5-phosphate. Its pathway is carbohydrate degradation; pentose phosphate pathway; D-ribose 5-phosphate from D-ribulose 5-phosphate (non-oxidative stage): step 1/1. Functionally, catalyzes the reversible conversion of ribose-5-phosphate to ribulose 5-phosphate. In Pseudomonas paraeruginosa (strain DSM 24068 / PA7) (Pseudomonas aeruginosa (strain PA7)), this protein is Ribose-5-phosphate isomerase A.